Consider the following 487-residue polypeptide: Serine/threonine-protein kinase 4 (487 aa).

N-acetylmethionine is present on M1. T3 is subject to Phosphothreonine. Residues 30–281 (FDVLEKLGEG…ATQLLQHPFV (252 aa)) enclose the Protein kinase domain. ATP is bound by residues 36–44 (LGEGSYGSV) and K59. D149 functions as the Proton acceptor in the catalytic mechanism. T183 is modified (phosphothreonine; by autocatalysis). S265 carries the post-translational modification Phosphoserine. Positions 290–310 (LRDLINEAMDVKLKRQESQQR) form a coiled coil. Positions 303–312 (KRQESQQREV) are enriched in basic and acidic residues. Residues 303–332 (KRQESQQREVDQDDEENSEEDEMDSGTMVR) are disordered. The span at 313 to 326 (DQDDEENSEEDEMD) shows a compositional bias: acidic residues. Phosphoserine is present on S320. Residues T340 and T367 each carry the phosphothreonine modification. A Phosphothreonine; by PKB/AKT1 modification is found at T387. S410 and S414 each carry phosphoserine. Y433 carries the post-translational modification Phosphotyrosine. An SARAH domain is found at 433–480 (YEFLKSWTVEDLQKRLLALDPMMEQEIEEIRQKYQSKRQPILDAIEAK).

Belongs to the protein kinase superfamily. STE Ser/Thr protein kinase family. STE20 subfamily. In terms of assembly, homodimer; mediated via the coiled-coil region. Interacts with NORE1, which inhibits autoactivation. Interacts with and stabilizes SAV1. Interacts with RASSF1. Interacts with FOXO3. Interacts with RASSF2 (via SARAH domain). Interacts with AR, PKB/AKT1, TNNI3 and SIRT1. Interacts with DLG5 (via PDZ domain 3). Interacts with MARK3 and SCRIB in the presence of DLG5. Mg(2+) is required as a cofactor. Post-translationally, autophosphorylated on serine and threonine residues. Phosphorylation at Thr-387 by PKB/AKT1, leads to inhibition of its: kinase activity, nuclear translocation and autophosphorylation at Thr-183. It also diminishes its cleavage by caspases and its ability to phosphorylate FOXO3. In terms of processing, proteolytically cleaved by caspase-3 during apoptosis at Asp-326 and Asp-349 resulting in a 37 kDa or a 39 kDa subunit respectively. The 39 kDa subunit is further cleaved into the 37 kDa form. Proteolytic cleavage results in kinase activation and nuclear translocation of the truncated form (MST1/N). It is less likely that cleavage at Asp-349 is a prerequisite for activation as this site is not conserved in the murine ortholog.

The protein resides in the cytoplasm. It is found in the nucleus. It carries out the reaction L-seryl-[protein] + ATP = O-phospho-L-seryl-[protein] + ADP + H(+). It catalyses the reaction L-threonyl-[protein] + ATP = O-phospho-L-threonyl-[protein] + ADP + H(+). Inhibited by the C-terminal non-catalytic region. Activated by caspase-cleavage. Full activation also requires homodimerization and autophosphorylation of Thr-183. Activated by RASSF1 which acts by preventing its dephosphorylation. Functionally, stress-activated, pro-apoptotic kinase which, following caspase-cleavage, enters the nucleus and induces chromatin condensation followed by internucleosomal DNA fragmentation. Key component of the Hippo signaling pathway which plays a pivotal role in organ size control and tumor suppression by restricting proliferation and promoting apoptosis. The core of this pathway is composed of a kinase cascade wherein STK3/MST2 and STK4/MST1, in complex with its regulatory protein SAV1, phosphorylates and activates LATS1/2 in complex with its regulatory protein MOB1, which in turn phosphorylates and inactivates YAP1 oncoprotein and WWTR1/TAZ. Phosphorylation of YAP1 by LATS2 inhibits its translocation into the nucleus to regulate cellular genes important for cell proliferation, cell death, and cell migration. STK3/MST2 and STK4/MST1 are required to repress proliferation of mature hepatocytes, to prevent activation of facultative adult liver stem cells (oval cells), and to inhibit tumor formation. Phosphorylates 'Ser-14' of histone H2B (H2BS14ph) during apoptosis. Phosphorylates FOXO3 upon oxidative stress, which results in its nuclear translocation and cell death initiation. Phosphorylates MOBKL1A, MOBKL1B and RASSF2. Phosphorylates TNNI3 (cardiac Tn-I) and alters its binding affinity to TNNC1 (cardiac Tn-C) and TNNT2 (cardiac Tn-T). Phosphorylates FOXO1 on 'Ser-212' and regulates its activation and stimulates transcription of PMAIP1 in a FOXO1-dependent manner. Phosphorylates SIRT1 and inhibits SIRT1-mediated p53/TP53 deacetylation, thereby promoting p53/TP53 dependent transcription and apoptosis upon DNA damage. Acts as an inhibitor of PKB/AKT1. Phosphorylates AR on 'Ser-650' and suppresses its activity by intersecting with PKB/AKT1 signaling and antagonizing formation of AR-chromatin complexes. The sequence is that of Serine/threonine-protein kinase 4 (STK4) from Macaca mulatta (Rhesus macaque).